We begin with the raw amino-acid sequence, 362 residues long: Metacaspase-3 (362 aa).

Active-site residues include His-174 and Cys-230.

Belongs to the peptidase C14B family.

The sequence is that of Metacaspase-3 (AMC3) from Arabidopsis thaliana (Mouse-ear cress).